The primary structure comprises 502 residues: ATP synthase subunit alpha (502 aa).

Position 169–176 (169–176 (GDRQTGKT)) interacts with ATP.

Belongs to the ATPase alpha/beta chains family. F-type ATPases have 2 components, CF(1) - the catalytic core - and CF(0) - the membrane proton channel. CF(1) has five subunits: alpha(3), beta(3), gamma(1), delta(1), epsilon(1). CF(0) has three main subunits: a(1), b(2) and c(9-12). The alpha and beta chains form an alternating ring which encloses part of the gamma chain. CF(1) is attached to CF(0) by a central stalk formed by the gamma and epsilon chains, while a peripheral stalk is formed by the delta and b chains.

Its subcellular location is the cell inner membrane. It carries out the reaction ATP + H2O + 4 H(+)(in) = ADP + phosphate + 5 H(+)(out). Produces ATP from ADP in the presence of a proton gradient across the membrane. The alpha chain is a regulatory subunit. In Trichlorobacter lovleyi (strain ATCC BAA-1151 / DSM 17278 / SZ) (Geobacter lovleyi), this protein is ATP synthase subunit alpha.